The following is a 265-amino-acid chain: MISGEQTPTQYIQHHLQNWTVGEGFWAVNVDTIFWSVLLGVLFLWSFRRVAKKSSAGVPGKWQCFVEMIVEFVDNSVKESFHGKDKLIAPLALTIFVWIFLMNLMDLIPVDWLPTAAMYGGYWLGFVEDPHDVYMKVVPTTDLNTTFALSLSVFALIIIYSIKYKGVKGFAKEMTFTPFNHWALIPVNFVLESITLLAKPASLALRLFGNMYAGELIFILIAMIGFWQLPAHFAWAVFHILVITLQAFIFMMLTIVYLSMASSEH.

The next 5 membrane-spanning stretches (helical) occupy residues 25-45, 88-108, 142-162, 207-227, and 233-253; these read FWAV…LFLW, IAPL…MDLI, DLNT…IYSI, LFGN…IGFW, and FAWA…FMML.

Belongs to the ATPase A chain family. In terms of assembly, F-type ATPases have 2 components, CF(1) - the catalytic core - and CF(0) - the membrane proton channel. CF(1) has five subunits: alpha(3), beta(3), gamma(1), delta(1), epsilon(1). CF(0) has three main subunits: a(1), b(2) and c(9-12). The alpha and beta chains form an alternating ring which encloses part of the gamma chain. CF(1) is attached to CF(0) by a central stalk formed by the gamma and epsilon chains, while a peripheral stalk is formed by the delta and b chains.

It is found in the cell inner membrane. Functionally, key component of the proton channel; it plays a direct role in the translocation of protons across the membrane. This Idiomarina loihiensis (strain ATCC BAA-735 / DSM 15497 / L2-TR) protein is ATP synthase subunit a.